Here is a 247-residue protein sequence, read N- to C-terminus: Uridylate kinase (247 aa).

ATP is bound at residue 16–19 (KLSG). Position 58 (G58) interacts with UMP. ATP contacts are provided by G59 and R63. Residues D78 and 139-146 (TGNPFFTT) each bind UMP. ATP is bound by residues T166, Y172, and D175.

The protein belongs to the UMP kinase family. As to quaternary structure, homohexamer.

The protein resides in the cytoplasm. It catalyses the reaction UMP + ATP = UDP + ADP. The protein operates within pyrimidine metabolism; CTP biosynthesis via de novo pathway; UDP from UMP (UMPK route): step 1/1. Inhibited by UTP. Catalyzes the reversible phosphorylation of UMP to UDP. In Xylella fastidiosa (strain Temecula1 / ATCC 700964), this protein is Uridylate kinase.